Consider the following 240-residue polypeptide: Sugar fermentation stimulation protein homolog (240 aa).

Belongs to the SfsA family.

This is Sugar fermentation stimulation protein homolog from Saccharolobus solfataricus (strain ATCC 35092 / DSM 1617 / JCM 11322 / P2) (Sulfolobus solfataricus).